We begin with the raw amino-acid sequence, 108 residues long: MNKYKKIKNNFDKEKKSYIVGFLFSLFLTIIPFFCTLNHLFSRKINFFVILLCALSQIIIHFIYFLHLDFSKKNSWNIISLLFILIIVFIIVFGSIWIMYNLNHHVIL.

Topologically, residues 1 to 16 (MNKYKKIKNNFDKEKK) are cytoplasmic. A helical membrane pass occupies residues 17–37 (SYIVGFLFSLFLTIIPFFCTL). Residues 38–46 (NHLFSRKIN) lie on the Extracellular side of the membrane. Residues 47 to 67 (FFVILLCALSQIIIHFIYFLH) form a helical membrane-spanning segment. Residues 68 to 77 (LDFSKKNSWN) are Cytoplasmic-facing. Residues 78 to 98 (IISLLFILIIVFIIVFGSIWI) traverse the membrane as a helical segment. The Extracellular segment spans residues 99–108 (MYNLNHHVIL).

Belongs to the cytochrome c oxidase bacterial subunit 4 family. In terms of assembly, heterooctamer of two A chains, two B chains, two C chains and two D chains.

It is found in the cell membrane. Its function is as follows. Cytochrome bo(3) ubiquinol terminal oxidase is the component of the aerobic respiratory chain of E.coli that predominates when cells are grown at high aeration. Has proton pump activity across the membrane in addition to electron transfer, pumping 2 protons/electron. The protein is Cytochrome bo(3) ubiquinol oxidase subunit 4 (cyoD) of Buchnera aphidicola subsp. Schizaphis graminum (strain Sg).